The following is a 134-amino-acid chain: Syncollin (134 aa).

The signal sequence occupies residues 1-21 (MSPLRPLLLALALASVPCAQG).

As to quaternary structure, monomer and homooligomer; most probably hexameric. Interacts with GP2. Contains intrachain disulfide bonds.

Its subcellular location is the zymogen granule membrane. The protein resides in the zymogen granule lumen. In terms of biological role, functions in exocytosis in pancreatic acinar cells regulating the fusion of zymogen granules with each other. May have a pore-forming activity on membranes and regulate exocytosis in other exocrine tissues. The chain is Syncollin (SYCN) from Homo sapiens (Human).